Here is a 539-residue protein sequence, read N- to C-terminus: GMP synthase [glutamine-hydrolyzing] (539 aa).

The 196-residue stretch at 20-215 folds into the Glutamine amidotransferase type-1 domain; sequence TILILDFGSQ…AIEICHAKPN (196 aa). The active-site Nucleophile is the cysteine 96. Catalysis depends on residues histidine 189 and glutamate 191. The region spanning 216 to 413 is the GMPS ATP-PPase domain; sequence WSMENFVDKE…LGIEHSLVWR (198 aa). 244 to 250 provides a ligand contact to ATP; that stretch reads SGGVDST. The XMP site is built by arginine 317, aspartate 475, lysine 531, and glutamate 537.

Homodimer. It depends on Mg(2+) as a cofactor.

The protein localises to the cytoplasm. Its subcellular location is the cytosol. The catalysed reaction is XMP + L-glutamine + ATP + H2O = GMP + L-glutamate + AMP + diphosphate + 2 H(+). It participates in purine metabolism; GMP biosynthesis; GMP from XMP (L-Gln route): step 1/1. Catalyzes the conversion of xanthine monophosphate (XMP) to GMP in the presence of glutamine and ATP through an adenyl-XMP intermediate. This is GMP synthase [glutamine-hydrolyzing] from Schizosaccharomyces pombe (strain 972 / ATCC 24843) (Fission yeast).